A 1059-amino-acid chain; its full sequence is MPKRKDIQKIMVIGSGPIVIGQAAEFDYAGTQACLSLKEEGYSVVLVNSNPATIMTDKEIADRVYIEPITLEFVARILRKERPDALLPTLGGQTGLNMAMELSKSGLLEELGVELLGTKLSAIDQAEDRDLFKQLMEELGQPIPESEIVNTVDEALEFAAGIGYPVIVRPAFTLGGTGGGICSNEEELQEIAENGLKLSPVTQCLIERSIAGFKEIEYEVMRDGADNALVVCNMENFDPVGIHTGDSIVFAPSQTISDYEYQMLRDASLKIIRALKIEGGCNVQLALDPHSFKYYVIEVNPRVSRSSALASKATGYPIAKLAAKIAVGLTLDEIINPVTGSTYAMFEPALDYVVAKIPRFPFDKFEQGERRLGTQMKATGEVMAIGRNIEESLLKACRSLEVCVDHNELPALSQVSDDELMRKIVKAQDDRLFYISEAIRRGYSPDEIAELTKIDVFFLDKLLHIYEIEQELASHIGDSYVLKKAKQNGFADTKIASLWDMTAEQVRRIRQEQKIVPVYKMVDTCAAEFESATPYFYSTYGFENESVKSSKESVLVLGSGPIRIGQGVEFDYATVHSVKAIQAAGYEAIIMNSNPETVSTDFSVSDKLYFEPLTFEDVMNVIELEQPKGVIVQFGGQTAINLAEPLSKAGVKILGTQVADLDRAEDRDLFEQALKELDIPQPPGQTATNEEEAVEAARKIGFPVLVRPSYVLGGRAMEIVENEADLRSYMRTAVKASPDHPVLVDSYIVGDECEVDAISDGRQVLIPGIMEHIERAGVHSGDSMAAYPPQTLSQKVKDTIADYTKRLALGLNCIGMMNIQFVIKDEQVYVIEVNPRASRTVPFLSKVTDIPMAQVATRLILGETLAELGYEDGLYPESSMVHIKAPVFSFTKLAKVDSLLGPEMKSTGEVMGSDRTLEKALYKAFEASYLHLPNFGNIVFTIAGDSKEEALQLAQRFANIGYGIWATKGTASYFENHGLHVRLVEKIGSDDDKDIPAYIRKGKVQAIINTVGTKRTADKHGQIIRSSAIEHGVPLFTALDTADAMLKVLESRSFTTEAI.

A carboxyphosphate synthetic domain region spans residues 1 to 401 (MPKRKDIQKI…SLLKACRSLE (401 aa)). Residues Arg129, Arg169, Gly175, Gly176, Arg208, Ile210, Glu215, Gly241, Ile242, His243, Gln284, and Glu298 each contribute to the ATP site. Residues 133–327 (KQLMEELGQP…IAKLAAKIAV (195 aa)) enclose the ATP-grasp 1 domain. Mg(2+)-binding residues include Gln284, Glu298, and Asn300. Residues Gln284, Glu298, and Asn300 each coordinate Mn(2+). The oligomerization domain stretch occupies residues 402–546 (VCVDHNELPA…YSTYGFENES (145 aa)). A carbamoyl phosphate synthetic domain region spans residues 547–929 (VKSSKESVLV…ALYKAFEASY (383 aa)). The ATP-grasp 2 domain maps to 671–861 (EQALKELDIP…MAQVATRLIL (191 aa)). ATP contacts are provided by Arg707, Ser746, Ile748, Glu752, Gly777, Val778, His779, Ser780, Gln820, and Glu832. Residues Gln820, Glu832, and Asn834 each coordinate Mg(2+). Gln820, Glu832, and Asn834 together coordinate Mn(2+). An MGS-like domain is found at 930 to 1059 (LHLPNFGNIV…ESRSFTTEAI (130 aa)). The interval 930–1059 (LHLPNFGNIV…ESRSFTTEAI (130 aa)) is allosteric domain.

This sequence belongs to the CarB family. Composed of two chains; the small (or glutamine) chain promotes the hydrolysis of glutamine to ammonia, which is used by the large (or ammonia) chain to synthesize carbamoyl phosphate. Tetramer of heterodimers (alpha,beta)4. Mg(2+) is required as a cofactor. Mn(2+) serves as cofactor.

It catalyses the reaction hydrogencarbonate + L-glutamine + 2 ATP + H2O = carbamoyl phosphate + L-glutamate + 2 ADP + phosphate + 2 H(+). It carries out the reaction hydrogencarbonate + NH4(+) + 2 ATP = carbamoyl phosphate + 2 ADP + phosphate + 2 H(+). It participates in amino-acid biosynthesis; L-arginine biosynthesis; carbamoyl phosphate from bicarbonate: step 1/1. Its pathway is pyrimidine metabolism; UMP biosynthesis via de novo pathway; (S)-dihydroorotate from bicarbonate: step 1/3. Its function is as follows. Large subunit of the glutamine-dependent carbamoyl phosphate synthetase (CPSase). CPSase catalyzes the formation of carbamoyl phosphate from the ammonia moiety of glutamine, carbonate, and phosphate donated by ATP, constituting the first step of 2 biosynthetic pathways, one leading to arginine and/or urea and the other to pyrimidine nucleotides. The large subunit (synthetase) binds the substrates ammonia (free or transferred from glutamine from the small subunit), hydrogencarbonate and ATP and carries out an ATP-coupled ligase reaction, activating hydrogencarbonate by forming carboxy phosphate which reacts with ammonia to form carbamoyl phosphate. The protein is Carbamoyl phosphate synthase large chain of Streptococcus sanguinis (strain SK36).